A 226-amino-acid polypeptide reads, in one-letter code: dITP/XTP pyrophosphatase (226 aa).

Substrate is bound at residue 14–19 (TGNKDK). Mg(2+) is bound by residues E49 and D83. D83 (proton acceptor) is an active-site residue. Substrate is bound by residues T84, 176–179 (FGYD), K199, and 204–205 (HR).

Belongs to the HAM1 NTPase family. Homodimer. The cofactor is Mg(2+).

It catalyses the reaction XTP + H2O = XMP + diphosphate + H(+). The catalysed reaction is dITP + H2O = dIMP + diphosphate + H(+). It carries out the reaction ITP + H2O = IMP + diphosphate + H(+). Functionally, pyrophosphatase that catalyzes the hydrolysis of nucleoside triphosphates to their monophosphate derivatives, with a high preference for the non-canonical purine nucleotides XTP (xanthosine triphosphate), dITP (deoxyinosine triphosphate) and ITP. Seems to function as a house-cleaning enzyme that removes non-canonical purine nucleotides from the nucleotide pool, thus preventing their incorporation into DNA/RNA and avoiding chromosomal lesions. This Chlorobaculum tepidum (strain ATCC 49652 / DSM 12025 / NBRC 103806 / TLS) (Chlorobium tepidum) protein is dITP/XTP pyrophosphatase.